A 1746-amino-acid chain; its full sequence is tRNA (32-2'-O)-methyltransferase regulator THADA (1746 aa).

A coiled-coil region spans residues 1252 to 1286 (EQALAEIRRIVVELKALQLRLKNTEAANTKLNTNV).

This sequence belongs to the THADA family. As to quaternary structure, interacts with SERCA. As to expression, detected in the larval fat body, salivary glands and wing imaginal disks (at protein level).

Its subcellular location is the endoplasmic reticulum. Functionally, together with methyltransferase Trm7-32, methylates the 2'-O-ribose of nucleotides at position 32 of the anticodon loop of substrate tRNAs. Plays a key role in energy homeostasis by regulating the balance between energy storage and heat production. Functions by negatively regulating Ca(2+) signaling pathways that are involved in heat production and maintaining correct lipid storage in the fat body. Regulates Ca(2+) signaling pathways by reducing the activity of the calcium-transporting ATPase SERCA possibly by promoting uncoupling of SERCA ATP hydrolysis from calcium pumping. May also function in the nervous system to control feeding behavior. The chain is tRNA (32-2'-O)-methyltransferase regulator THADA from Drosophila melanogaster (Fruit fly).